A 239-amino-acid chain; its full sequence is Protein UL20 homolog (239 aa).

The next 3 membrane-spanning stretches (helical) occupy residues 65-81 (PSFS…ALVI), 140-156 (FVIG…FMVV), and 189-208 (LMPL…STAV).

This sequence belongs to the alphaherpesvirinae UL20 family. In terms of assembly, interacts with gK (via N-terminus); this interaction plays a role in the coordinate transport of UL20 and gK to the trans-Golgi network (TGN), and is required for their cell surface expression. Interacts with gB.

Its subcellular location is the virion. It localises to the host cell membrane. The protein resides in the host endosome membrane. It is found in the host Golgi apparatus membrane. The protein localises to the host nucleus membrane. Functionally, plays an essential role in egress of virus particles from the nucleus, cytoplasmic envelopment and virus-induced cell fusion. Forms a functional protein complex with gK and this interaction is absolutely essential for their coordinate intracellular transport, gK glycosylation, expression on host cell surface, and function. Together, they modulate gB-mediated virus-induced cell fusion and virion egress and therefore actively participate in these processes. The polypeptide is Protein UL20 homolog (Equus caballus (Horse)).